Reading from the N-terminus, the 603-residue chain is Myotubularin (603 aa).

Residues Ser13 and Ser18 each carry the phosphoserine modification. Positions 29–97 (QDVSETVPRL…GVISRIEKMG (69 aa)) constitute a GRAM domain. One can recognise a Myotubularin phosphatase domain in the interval 163 to 538 (GWTVYNPVEE…RHLELWVNYY (376 aa)). A 1,2-diacyl-sn-glycero-3-phospho-(1D-myo-inositol-3,5-bisphosphate)-binding residues include Asn288, Asn313, and Ile314. Residues Asn288, Asn313, and Ile314 each contribute to the a 1,2-diacyl-sn-glycero-3-phospho-(1D-myo-inositol-3-phosphate) site. The active-site Phosphocysteine intermediate is the Cys375. Positions 376, 377, 378, 379, 380, 381, 417, and 421 each coordinate a 1,2-diacyl-sn-glycero-3-phospho-(1D-myo-inositol-3,5-bisphosphate). The a 1,2-diacyl-sn-glycero-3-phospho-(1D-myo-inositol-3-phosphate) site is built by Ser376, Asp377, Gly378, Trp379, Asp380, and Arg381. Arg421 is a binding site for a 1,2-diacyl-sn-glycero-3-phospho-(1D-myo-inositol-3-phosphate). Thr495 is modified (phosphothreonine). A Phosphoserine modification is found at Ser588.

This sequence belongs to the protein-tyrosine phosphatase family. Non-receptor class myotubularin subfamily. Heterodimer with MTMR12. Interacts with KMT2A/MLL1 (via SET domain). Interacts with DES in skeletal muscle but not in cardiac muscle. Interacts with SPEG. In terms of tissue distribution, widely expressed with highest levels detected in heart and muscle and low levels in brain (at protein level). Expressed in skeletal muscles (at protein level).

It localises to the cytoplasm. The protein resides in the cell membrane. Its subcellular location is the cell projection. It is found in the filopodium. The protein localises to the ruffle. It localises to the late endosome. The protein resides in the myofibril. Its subcellular location is the sarcomere. It catalyses the reaction a 1,2-diacyl-sn-glycero-3-phospho-(1D-myo-inositol-3-phosphate) + H2O = a 1,2-diacyl-sn-glycero-3-phospho-(1D-myo-inositol) + phosphate. The catalysed reaction is a 1,2-diacyl-sn-glycero-3-phospho-(1D-myo-inositol-3,5-bisphosphate) + H2O = a 1,2-diacyl-sn-glycero-3-phospho-(1D-myo-inositol-5-phosphate) + phosphate. The enzyme catalyses 1,2-dioctanoyl-sn-glycero-3-phospho-(1-D-myo-inositol-3-phosphate) + H2O = 1,2-dioctanoyl-sn-glycero-3-phospho-(1D-myo-inositol) + phosphate. It carries out the reaction 1,2-dioctanoyl-sn-glycero-3-phospho-(1D-myo-inositol-3,5-bisphosphate) + H2O = 1,2-dioctanoyl-sn-glycero-3-phospho-(1D-myo-inositol-5-phosphate) + phosphate. It catalyses the reaction 1,2-dihexadecanoyl-sn-glycero-3-phospho-(1D-myo-inositol-3,5-phosphate) + H2O = 1,2-dihexadecanoyl-sn-glycero-3-phospho-(1D-myo-inositol-5-phosphate) + phosphate. Its activity is regulated as follows. Allosterically activated by phosphatidylinositol 5-phosphate (PI5P). Functionally, lipid phosphatase which dephosphorylates phosphatidylinositol 3-monophosphate (PI3P) and phosphatidylinositol 3,5-bisphosphate (PI(3,5)P2). Has also been shown to dephosphorylate phosphotyrosine- and phosphoserine-containing peptides. Negatively regulates EGFR degradation through regulation of EGFR trafficking from the late endosome to the lysosome. Plays a role in vacuolar formation and morphology. Regulates desmin intermediate filament assembly and architecture. Plays a role in mitochondrial morphology and positioning. Required for skeletal muscle maintenance but not for myogenesis. In skeletal muscles, stabilizes MTMR12 protein levels. The sequence is that of Myotubularin from Mus musculus (Mouse).